Consider the following 1031-residue polypeptide: Zinc finger protein 445 (1031 aa).

Residues 1-43 are disordered; that stretch reads MPPGRWHAAYPAQAQSSRERGRLQTVKKEEEDESYTPVQAARP. The segment covering 17–29 has biased composition (basic and acidic residues); the sequence is SRERGRLQTVKKE. Residue K28 forms a Glycyl lysine isopeptide (Lys-Gly) (interchain with G-Cter in SUMO1) linkage. Residues 55–137 enclose the SCAN box domain; sequence RQLFRQLRYH…ALLEELQRDL (83 aa). The KRAB domain maps to 234-304; the sequence is MTFKDVEVTF…NMQAAQPKGN (71 aa). Glycyl lysine isopeptide (Lys-Gly) (interchain with G-Cter in SUMO2) cross-links involve residues K317, K374, K375, and K399. C2H2-type zinc fingers lie at residues 485–507, 513–535, and 541–563; these read FKCS…QRLH, FKCR…EKIH, and YKCD…RETH. K567 is covalently cross-linked (Glycyl lysine isopeptide (Lys-Gly) (interchain with G-Cter in SUMO2)). 2 consecutive C2H2-type zinc fingers follow at residues 597–619 and 625–647; these read FDCS…QRIH and YKCT…MRLH. Residue K654 forms a Glycyl lysine isopeptide (Lys-Gly) (interchain with G-Cter in SUMO2) linkage. C2H2-type zinc fingers lie at residues 681–703 and 709–731; these read FLCQ…QRIH and YQCS…KKKH. Glycyl lysine isopeptide (Lys-Gly) (interchain with G-Cter in SUMO2) cross-links involve residues K736 and K758. C2H2-type zinc fingers lie at residues 762–784, 790–812, 840–862, 868–890, and 896–918; these read YKCS…QRVH, YKCR…QRIH, FWCQ…KGIH, YKCN…QRIH, and FKCQ…QRKH. The interval 911 to 939 is disordered; sequence LSSHQRKHTRAAQAERSPPARSSSQDTKL. Glycyl lysine isopeptide (Lys-Gly) (interchain with G-Cter in SUMO2) cross-links involve residues K938, K956, and K975. C2H2-type zinc fingers lie at residues 978 to 1000 and 1006 to 1028; these read HKCS…KRFH and FKCS…MKNH.

It belongs to the krueppel C2H2-type zinc-finger protein family.

The protein resides in the nucleus. In terms of biological role, transcription regulator required to maintain maternal and paternal gene imprinting, a process by which gene expression is restricted in a parent of origin-specific manner by epigenetic modification of genomic DNA and chromatin, including DNA methylation. Acts by controlling DNA methylation during the earliest multicellular stages of development at multiple imprinting control regions (ICRs). Acts together with ZFP57, but seems to be the major factor in human early embryonic imprinting maintenance. In contrast, in mice, ZFP57 plays the predominant role in imprinting maintenance. The sequence is that of Zinc finger protein 445 from Homo sapiens (Human).